Reading from the N-terminus, the 430-residue chain is Probable WRKY transcription factor 14 (430 aa).

The segment at residues 211 to 277 is a DNA-binding region (WRKY); the sequence is SGEVVPSDLW…YTSEHNHPWP (67 aa). The interval 283-366 is disordered; it reads LAGSTRSSTS…APYRPELHDH (84 aa). Residues 286 to 306 show a composition bias toward low complexity; it reads STRSSTSSSSNPNPSKPSTAN. Over residues 307 to 319 the composition is skewed to polar residues; the sequence is VNSSSIGSQNTIY. The span at 340-354 shows a compositional bias: acidic residues; sequence GDDMELENVDDDDDN.

Belongs to the WRKY group II-e family.

It is found in the nucleus. Transcription factor. Interacts specifically with the W box (5'-(T)TGAC[CT]-3'), a frequently occurring elicitor-responsive cis-acting element. In Arabidopsis thaliana (Mouse-ear cress), this protein is Probable WRKY transcription factor 14 (WRKY14).